The sequence spans 463 residues: Asparagine--tRNA ligase (463 aa).

It belongs to the class-II aminoacyl-tRNA synthetase family. Homodimer.

Its subcellular location is the cytoplasm. It carries out the reaction tRNA(Asn) + L-asparagine + ATP = L-asparaginyl-tRNA(Asn) + AMP + diphosphate + H(+). The protein is Asparagine--tRNA ligase of Bacillus cytotoxicus (strain DSM 22905 / CIP 110041 / 391-98 / NVH 391-98).